The following is a 315-amino-acid chain: Manganese-dependent 2,3-dihydroxybiphenyl 1,2-dioxygenase (315 aa).

VOC domains are found at residues 7 to 121 and 150 to 273; these read KFGH…IYYD and RIDH…LFSG. His153, His216, and Glu269 together coordinate Mn(2+).

Belongs to the extradiol ring-cleavage dioxygenase family. As to quaternary structure, homotetramer. The cofactor is Mn(2+).

The catalysed reaction is biphenyl-2,3-diol + O2 = 2-hydroxy-6-oxo-6-phenylhexa-2,4-dienoate + H(+). Its pathway is xenobiotic degradation; biphenyl degradation; 2-hydroxy-2,4-pentadienoate and benzoate from biphenyl: step 3/4. Catalyzes the meta-cleavage of the hydroxylated biphenyl ring. The enzyme can oxidize a wide range of substrates, and the substrate preference order is 2,3-dihydroxybiphenyl &gt; 3-methylcatechol &gt; catechol &gt; 4-methylcatechol &gt; 4-chlorocatechol. The polypeptide is Manganese-dependent 2,3-dihydroxybiphenyl 1,2-dioxygenase (bphC) (Geobacillus genomosp. 3).